The primary structure comprises 128 residues: S-adenosylmethionine decarboxylase proenzyme (128 aa).

Residue Ser63 is the Schiff-base intermediate with substrate; via pyruvic acid of the active site. Ser63 is subject to Pyruvic acid (Ser); by autocatalysis. Residue His68 is the Proton acceptor; for processing activity of the active site. The Proton donor; for catalytic activity role is filled by Cys83.

Belongs to the prokaryotic AdoMetDC family. Type 1 subfamily. As to quaternary structure, heterotetramer of two alpha and two beta chains arranged as a dimer of alpha/beta heterodimers. The cofactor is pyruvate. In terms of processing, is synthesized initially as an inactive proenzyme. Formation of the active enzyme involves a self-maturation process in which the active site pyruvoyl group is generated from an internal serine residue via an autocatalytic post-translational modification. Two non-identical subunits are generated from the proenzyme in this reaction, and the pyruvate is formed at the N-terminus of the alpha chain, which is derived from the carboxyl end of the proenzyme. The post-translation cleavage follows an unusual pathway, termed non-hydrolytic serinolysis, in which the side chain hydroxyl group of the serine supplies its oxygen atom to form the C-terminus of the beta chain, while the remainder of the serine residue undergoes an oxidative deamination to produce ammonia and the pyruvoyl group blocking the N-terminus of the alpha chain.

It carries out the reaction S-adenosyl-L-methionine + H(+) = S-adenosyl 3-(methylsulfanyl)propylamine + CO2. It participates in amine and polyamine biosynthesis; S-adenosylmethioninamine biosynthesis; S-adenosylmethioninamine from S-adenosyl-L-methionine: step 1/1. Its function is as follows. Catalyzes the decarboxylation of S-adenosylmethionine to S-adenosylmethioninamine (dcAdoMet), the propylamine donor required for the synthesis of the polyamines spermine and spermidine from the diamine putrescine. In Leptospira borgpetersenii serovar Hardjo-bovis (strain JB197), this protein is S-adenosylmethionine decarboxylase proenzyme.